The primary structure comprises 492 residues: Cobyric acid synthase (492 aa).

The 195-residue stretch at H259 to A453 folds into the GATase cobBQ-type domain. Residue C340 is the Nucleophile of the active site. H445 is a catalytic residue.

This sequence belongs to the CobB/CobQ family. CobQ subfamily.

Its pathway is cofactor biosynthesis; adenosylcobalamin biosynthesis. Its function is as follows. Catalyzes amidations at positions B, D, E, and G on adenosylcobyrinic A,C-diamide. NH(2) groups are provided by glutamine, and one molecule of ATP is hydrogenolyzed for each amidation. The protein is Cobyric acid synthase of Paracidovorax citrulli (strain AAC00-1) (Acidovorax citrulli).